Reading from the N-terminus, the 37-residue chain is Turripeptide Lol6.2 (37 aa).

Disulfide bonds link cysteine 4–cysteine 16, cysteine 8–cysteine 21, and cysteine 15–cysteine 29.

In terms of tissue distribution, expressed by the venom duct.

It is found in the secreted. Functionally, acts as a neurotoxin by inhibiting an ion channel. The sequence is that of Turripeptide Lol6.2 from Iotyrris olangoensis (Sea snail).